Consider the following 204-residue polypeptide: Guanylate kinase (204 aa).

The Guanylate kinase-like domain maps to 5–184 (GLLLVLSGPS…AVDHIKAIVD (180 aa)). An ATP-binding site is contributed by 12–19 (GPSGVGKG).

Belongs to the guanylate kinase family.

It localises to the cytoplasm. It catalyses the reaction GMP + ATP = GDP + ADP. Its function is as follows. Essential for recycling GMP and indirectly, cGMP. The polypeptide is Guanylate kinase (Lactobacillus acidophilus (strain ATCC 700396 / NCK56 / N2 / NCFM)).